Here is a 732-residue protein sequence, read N- to C-terminus: MDAKTDDNSAGKCPVAHGSAGRTNRDWWPNQLNVQILHQQSSLSDPMGEAFDYAEEFKSLDLDAVIKDLHALMTDSQEWWPADFGHYGPLFIRMAWHSAGTYRIADGRGGAGAGQQRFAPLNSWPDNVNLDKARRLLWPIKQKYGRKISWADLLILTGNVALESMGFKTFGFAGGRADVWEPEQDVYWGPEGKWLADERYSGDRDLQNPLGAVQMGLIYVNPEGPNGNPDPLAAARDIRDTFARMAMNDEETVALIAGGHTFGKTHGAGDASLVGVEPEGADIEQQGLGWASKFGTGKGGDAIGSGLEVIWTTTPTKWSNNFFDNLFGFDWELTKSPAGAHQWTPKGGAGAGTVPDAHNSAKRHAPSMLTTDLALRFDPSYATISKRFHENPDQFADAFARAWYKLTHRDMGPVARYLGPLVPKEELPWQDVIPVVDHVLIDEQDAEALKAEILASGLSVSQLVSTAWASASTFRGSDKRGGANGARIRLSPQKDWAVNQPAELAKVLDKLQAIAKDFNAAQTGSKKVSLADLIVLGGNAGIEKAAKAAGHSVDVPFWPGRMDASQEQTDIHSFAPLEPTVDGFRNYVSGKQRLTVEEALVDRAQLLTLTAPELTVLVGGLRVLGANAGQSKHGVFTKQPETLSNDFFVNLLDMGTEWKATSDAKDVFEGRDRKTGEVKWTGTRADLIFGSHSQLRALAEVYATADAKAKFAKDFVVAWTKVMNADRFDIAG.

Residues 1 to 24 (MDAKTDDNSAGKCPVAHGSAGRTN) are disordered. Positions 96–219 (WHSAGTYRIA…LGAVQMGLIY (124 aa)) form a cross-link, tryptophyl-tyrosyl-methioninium (Trp-Tyr) (with M-245). Histidine 97 acts as the Proton acceptor in catalysis. Residues 219 to 245 (YVNPEGPNGNPDPLAAARDIRDTFARM) constitute a cross-link (tryptophyl-tyrosyl-methioninium (Tyr-Met) (with W-96)). Histidine 260 is a binding site for heme b.

This sequence belongs to the peroxidase family. Peroxidase/catalase subfamily. As to quaternary structure, homodimer or homotetramer. Heme b serves as cofactor. Formation of the three residue Trp-Tyr-Met cross-link is important for the catalase, but not the peroxidase activity of the enzyme.

The catalysed reaction is H2O2 + AH2 = A + 2 H2O. The enzyme catalyses 2 H2O2 = O2 + 2 H2O. Its function is as follows. Bifunctional enzyme with both catalase and broad-spectrum peroxidase activity. The protein is Catalase-peroxidase of Mesorhizobium japonicum (strain LMG 29417 / CECT 9101 / MAFF 303099) (Mesorhizobium loti (strain MAFF 303099)).